Here is a 486-residue protein sequence, read N- to C-terminus: Membrane-bound lytic murein transglycosylase F (486 aa).

The N-terminal stretch at 1–21 (MTRIKLSYFTIGLVALLLALA) is a signal peptide. A non-LT domain region spans residues 22-268 (LWPNIPWRNG…RLEEKYLGHV (247 aa)). Residues 269-486 (GSFDYVDTKT…VVGPGWSIGD (218 aa)) are LT domain. The active site involves Glu313.

The protein in the N-terminal section; belongs to the bacterial solute-binding protein 3 family. This sequence in the C-terminal section; belongs to the transglycosylase Slt family.

It is found in the cell outer membrane. The enzyme catalyses Exolytic cleavage of the (1-&gt;4)-beta-glycosidic linkage between N-acetylmuramic acid (MurNAc) and N-acetylglucosamine (GlcNAc) residues in peptidoglycan, from either the reducing or the non-reducing ends of the peptidoglycan chains, with concomitant formation of a 1,6-anhydrobond in the MurNAc residue.. Murein-degrading enzyme that degrades murein glycan strands and insoluble, high-molecular weight murein sacculi, with the concomitant formation of a 1,6-anhydromuramoyl product. Lytic transglycosylases (LTs) play an integral role in the metabolism of the peptidoglycan (PG) sacculus. Their lytic action creates space within the PG sacculus to allow for its expansion as well as for the insertion of various structures such as secretion systems and flagella. This chain is Membrane-bound lytic murein transglycosylase F, found in Yersinia pestis bv. Antiqua (strain Antiqua).